The chain runs to 370 residues: Cytochrome b (370 aa).

4 consecutive transmembrane segments (helical) span residues 25–45, 69–90, 105–125, and 170–190; these read FGSM…FLAI, WIMQ…YIHI, WLSG…GYVL, and FFAL…IHII. The heme b site is built by His75 and His89. Residues His174 and His188 each coordinate heme b. Residue His193 coordinates a ubiquinone. Helical transmembrane passes span 218-238, 280-300, 312-332, and 339-358; these read YKDM…MSFT, LGGT…PFTH, LTQI…WTAT, and FISI…IINP.

The protein belongs to the cytochrome b family. As to quaternary structure, the cytochrome bc1 complex contains 3 respiratory subunits (MT-CYB, CYC1 and UQCRFS1), 2 core proteins (UQCRC1 and UQCRC2) and probably 6 low-molecular weight proteins. Heme b serves as cofactor.

Its subcellular location is the mitochondrion inner membrane. Functionally, component of the ubiquinol-cytochrome c reductase complex (complex III or cytochrome b-c1 complex) that is part of the mitochondrial respiratory chain. The b-c1 complex mediates electron transfer from ubiquinol to cytochrome c. Contributes to the generation of a proton gradient across the mitochondrial membrane that is then used for ATP synthesis. The chain is Cytochrome b (MT-CYB) from Bungarus fasciatus (Banded krait).